The chain runs to 283 residues: Bifunctional protein FolD (283 aa).

NADP(+)-binding positions include 165-167 (GRS), S190, and T231.

The protein belongs to the tetrahydrofolate dehydrogenase/cyclohydrolase family. As to quaternary structure, homodimer.

It catalyses the reaction (6R)-5,10-methylene-5,6,7,8-tetrahydrofolate + NADP(+) = (6R)-5,10-methenyltetrahydrofolate + NADPH. It carries out the reaction (6R)-5,10-methenyltetrahydrofolate + H2O = (6R)-10-formyltetrahydrofolate + H(+). It functions in the pathway one-carbon metabolism; tetrahydrofolate interconversion. Functionally, catalyzes the oxidation of 5,10-methylenetetrahydrofolate to 5,10-methenyltetrahydrofolate and then the hydrolysis of 5,10-methenyltetrahydrofolate to 10-formyltetrahydrofolate. The polypeptide is Bifunctional protein FolD (Nocardia farcinica (strain IFM 10152)).